Here is a 392-residue protein sequence, read N- to C-terminus: Pyruvate synthase subunit PorA (392 aa).

Heterotetramer of one alpha, one beta, one delta and one gamma chain.

It catalyses the reaction 2 oxidized [2Fe-2S]-[ferredoxin] + pyruvate + CoA = 2 reduced [2Fe-2S]-[ferredoxin] + acetyl-CoA + CO2 + H(+). In Thermotoga maritima (strain ATCC 43589 / DSM 3109 / JCM 10099 / NBRC 100826 / MSB8), this protein is Pyruvate synthase subunit PorA (porA).